Consider the following 242-residue polypeptide: Placenta-expressed transcript 1 protein (242 aa).

The first 26 residues, methionine 1–cysteine 26, serve as a signal peptide directing secretion. The Extracellular portion of the chain corresponds to threonine 27 to alanine 220. 3 N-linked (GlcNAc...) asparagine glycosylation sites follow: asparagine 28, asparagine 81, and asparagine 106. The tract at residues valine 162 to leucine 209 is disordered. Positions lysine 169–threonine 178 are enriched in pro residues. Positions threonine 179 to serine 205 are enriched in low complexity. A helical transmembrane segment spans residues phenylalanine 221–leucine 241. Residue phenylalanine 242 is a topological domain, cytoplasmic.

Post-translationally, N-glycosylated.

Its subcellular location is the membrane. The protein localises to the apical cell membrane. Functionally, modulates leading keratinocyte migration and cellular adhesion to matrix proteins during a wound-healing response and promotes wound repair. May play a role during trichilemmal differentiation of the hair follicle. The polypeptide is Placenta-expressed transcript 1 protein (PLET1) (Bos taurus (Bovine)).